Here is a 322-residue protein sequence, read N- to C-terminus: Beta-ketoacyl-[acyl-carrier-protein] synthase III (322 aa).

Residues Cys-113 and His-249 contribute to the active site. Residues 250–254 (QANLR) form an ACP-binding region. Asn-279 is a catalytic residue.

It belongs to the thiolase-like superfamily. FabH family. As to quaternary structure, homodimer.

Its subcellular location is the cytoplasm. It catalyses the reaction malonyl-[ACP] + acetyl-CoA + H(+) = 3-oxobutanoyl-[ACP] + CO2 + CoA. It participates in lipid metabolism; fatty acid biosynthesis. Catalyzes the condensation reaction of fatty acid synthesis by the addition to an acyl acceptor of two carbons from malonyl-ACP. Catalyzes the first condensation reaction which initiates fatty acid synthesis and may therefore play a role in governing the total rate of fatty acid production. Possesses both acetoacetyl-ACP synthase and acetyl transacylase activities. Its substrate specificity determines the biosynthesis of branched-chain and/or straight-chain of fatty acids. The polypeptide is Beta-ketoacyl-[acyl-carrier-protein] synthase III (Granulibacter bethesdensis (strain ATCC BAA-1260 / CGDNIH1)).